Reading from the N-terminus, the 190-residue chain is dCTP deaminase, dUMP-forming (190 aa).

Residues 101–106 (KSSLGR), D119, 127–129 (TLE), Q148, Y162, K170, and Q174 contribute to the dCTP site. E129 serves as the catalytic Proton donor/acceptor. The segment at 160–190 (HPYGSSRAGSKYQGQRGPTPSRSCQNFIRST) is disordered. The segment covering 171–190 (YQGQRGPTPSRSCQNFIRST) has biased composition (polar residues).

Belongs to the dCTP deaminase family. Homotrimer.

It catalyses the reaction dCTP + 2 H2O = dUMP + NH4(+) + diphosphate. Its pathway is pyrimidine metabolism; dUMP biosynthesis; dUMP from dCTP: step 1/1. Functionally, bifunctional enzyme that catalyzes both the deamination of dCTP to dUTP and the hydrolysis of dUTP to dUMP without releasing the toxic dUTP intermediate. The protein is dCTP deaminase, dUMP-forming of Mycobacterium bovis (strain ATCC BAA-935 / AF2122/97).